The sequence spans 227 residues: Ribosomal RNA large subunit methyltransferase E (227 aa).

S-adenosyl-L-methionine is bound by residues G78, W80, D103, D119, and D143. K183 serves as the catalytic Proton acceptor.

The protein belongs to the class I-like SAM-binding methyltransferase superfamily. RNA methyltransferase RlmE family.

The protein localises to the cytoplasm. It carries out the reaction uridine(2552) in 23S rRNA + S-adenosyl-L-methionine = 2'-O-methyluridine(2552) in 23S rRNA + S-adenosyl-L-homocysteine + H(+). In terms of biological role, specifically methylates the uridine in position 2552 of 23S rRNA at the 2'-O position of the ribose in the fully assembled 50S ribosomal subunit. The sequence is that of Ribosomal RNA large subunit methyltransferase E from Rickettsia rickettsii (strain Iowa).